Reading from the N-terminus, the 157-residue chain is Urease accessory protein UreE (157 aa).

This sequence belongs to the UreE family.

The protein resides in the cytoplasm. Its function is as follows. Involved in urease metallocenter assembly. Binds nickel. Probably functions as a nickel donor during metallocenter assembly. The chain is Urease accessory protein UreE from Corynebacterium glutamicum (strain R).